Reading from the N-terminus, the 196-residue chain is Large ribosomal subunit protein bL9 (196 aa).

The protein belongs to the bacterial ribosomal protein bL9 family.

Functionally, binds to the 23S rRNA. The protein is Large ribosomal subunit protein bL9 of Rhodopseudomonas palustris (strain HaA2).